The following is a 211-amino-acid chain: Uracil phosphoribosyltransferase (211 aa).

5-phospho-alpha-D-ribose 1-diphosphate is bound by residues Arg78, Arg103, and 130–138 (DPMLATGGT). Uracil-binding positions include Ile195 and 200–202 (GDA). Asp201 serves as a coordination point for 5-phospho-alpha-D-ribose 1-diphosphate.

Belongs to the UPRTase family. Mg(2+) serves as cofactor.

It carries out the reaction UMP + diphosphate = 5-phospho-alpha-D-ribose 1-diphosphate + uracil. The protein operates within pyrimidine metabolism; UMP biosynthesis via salvage pathway; UMP from uracil: step 1/1. Allosterically activated by GTP. Catalyzes the conversion of uracil and 5-phospho-alpha-D-ribose 1-diphosphate (PRPP) to UMP and diphosphate. This Paenarthrobacter aurescens (strain TC1) protein is Uracil phosphoribosyltransferase.